Consider the following 157-residue polypeptide: UPF0225 protein PA1039 (157 aa).

This sequence belongs to the UPF0225 family.

In Pseudomonas aeruginosa (strain ATCC 15692 / DSM 22644 / CIP 104116 / JCM 14847 / LMG 12228 / 1C / PRS 101 / PAO1), this protein is UPF0225 protein PA1039.